The primary structure comprises 482 residues: 2-succinylbenzoate--CoA ligase (482 aa).

It belongs to the ATP-dependent AMP-binding enzyme family. MenE subfamily.

The catalysed reaction is 2-succinylbenzoate + ATP + CoA = 2-succinylbenzoyl-CoA + AMP + diphosphate. Its pathway is quinol/quinone metabolism; 1,4-dihydroxy-2-naphthoate biosynthesis; 1,4-dihydroxy-2-naphthoate from chorismate: step 5/7. It participates in quinol/quinone metabolism; menaquinone biosynthesis. Its function is as follows. Converts 2-succinylbenzoate (OSB) to 2-succinylbenzoyl-CoA (OSB-CoA). This chain is 2-succinylbenzoate--CoA ligase, found in Bacillus cereus (strain ATCC 14579 / DSM 31 / CCUG 7414 / JCM 2152 / NBRC 15305 / NCIMB 9373 / NCTC 2599 / NRRL B-3711).